The chain runs to 226 residues: Pro-opiomelanocortin (226 aa).

The first 22 residues, 1 to 22, serve as a signal peptide directing secretion; it reads MVCAPWLLAVVVVCVCNPGVGG. A propeptide spanning residues 23–97 is cleaved from the precursor; the sequence is QCWDSSHCKD…DPEPHSDKRH (75 aa). The residue at position 98 (S98) is an N-acetylserine; in Corticotropin. An N-acetyltyrosine; in Beta-endorphin and Met-enkephalin modification is found at Y198.

This sequence belongs to the POMC family. Specific enzymatic cleavages at paired basic residues yield the different active peptides.

It is found in the secreted. Functionally, stimulates the adrenal glands to release cortisol. Anorexigenic peptide. Increases the pigmentation of skin by increasing melanin production in melanocytes. Its function is as follows. Increases the pigmentation of skin by increasing melanin production in melanocytes. In terms of biological role, endogenous orexigenic opiate. Functionally, endogenous opiate. The polypeptide is Pro-opiomelanocortin (pomc) (Oncorhynchus keta (Chum salmon)).